A 386-amino-acid chain; its full sequence is WD repeat-containing protein 89 (386 aa).

WD repeat units lie at residues 21–65 (KEPT…LLRE), 68–107 (GSPGLLSGVSFANSCDSVYSASTDGTVKCWDARGASEKPV), 112–156 (GYPS…QDLS), 167–207 (THSD…EEDA), 213–253 (NSVS…TDEP), and 318–357 (GHAATVRSFCWNVSEDSLLTGGEDAQLLLWKPGAMEKTFT).

This chain is WD repeat-containing protein 89 (Wdr89), found in Mus musculus (Mouse).